The chain runs to 1405 residues: Tonsoku-like protein (1405 aa).

7 TPR repeats span residues 23-56 (AVSCNQLGDFYNQQGKYTDAVREYVQEAQIYASM), 63-96 (AKAKRMVGEMYTLLCDYDAAKDHINDYLKIAKRL), 163-196 (ARCYLNIGVVKEHMEAFQESIEYIDKAIKISKTH), 203-237 (HLCYISMSLLYICKKNDATAALRFCNMALEVAKRF), 245-278 (CETLITKAEILIKAGDFASAKQILTKAYKKNTPD), 314-347 (KGLYEKLGDGCCHLMNYEKALTYYQKMLENAELN), and 355-388 (VPIYVSLYQTYRDNGQFDKALEYLWKEFELNQDA). One copy of the LRR 1 repeat lies at 153–181 (ISKLEQLDMQARCYLNIGVVKEHMEAFQE). One copy of the LRR 2 repeat lies at 439-465 (MVRLRRLMLKHNMQVLVENLEADATAK). The segment at 465 to 535 (KGIDLDQEES…RGNRTLVIKK (71 aa)) is disordered. Residues 469-483 (LDQEESVGDDEEESD) are compositionally biased toward acidic residues. ANK repeat units follow at residues 538–567 (KGETQLHQACISGNLELVRRLIDQGHTVNV), 571–600 (AGWLPLHEACNHGYREIVELLLDKGAASAI), and 609–638 (DGITPLFDACSNGFLDVAELLLDRGADATV). 3 disordered regions span residues 695–753 (FNAK…KEYR), 806–827 (KRINSGDLSRRTSKENFQDTAL), and 841–880 (TPENEYSQRQKQMRKLTLSRSSSMSSNHSSSATSSRKKHQ). Phosphoserine is present on residues Ser707 and Ser709. Basic and acidic residues predominate over residues 813–822 (LSRRTSKENF). A compositionally biased stretch (polar residues) spans 841 to 850 (TPENEYSQRQ). Residues 859–874 (SRSSSMSSNHSSSATS) show a composition bias toward low complexity. Ser893, Ser895, Ser899, and Ser902 each carry phosphoserine. LRR repeat units lie at residues 1085-1108 (QARLTVLDLSCNFIGNEGCQQLAK), 1113-1137 (LLQLKALRLQCNAIGSHGLEALLCG), 1143-1166 (LELLEELNLNQNPLGNASVRILSK), 1186-1211 (LTELQDFDLGFNKLTRFDISFNQLTQ), 1287-1311 (AKQLQMLDISDNSNLSGTTLGYILD), and 1333-1357 (LQKLEQLKQLPRRLELTVDEQVFSM).

Belongs to the Tonsoku family.

The protein localises to the nucleus. It localises to the nucleoplasm. Its subcellular location is the chromosome. Its function is as follows. Histone reader involved in homologous recombination-mediated repair of double-strand breaks (DSBs) at stalled or collapsed replication forks. Specifically recognizes and binds histone H3.1. The chain is Tonsoku-like protein from Drosophila melanogaster (Fruit fly).